We begin with the raw amino-acid sequence, 439 residues long: Amino-acid acetyltransferase (439 aa).

One can recognise an N-acetyltransferase domain in the interval 289–429 (EDIRIATVQD…DHYNYQRRSK (141 aa)).

It belongs to the acetyltransferase family. ArgA subfamily.

The protein resides in the cytoplasm. The enzyme catalyses L-glutamate + acetyl-CoA = N-acetyl-L-glutamate + CoA + H(+). It participates in amino-acid biosynthesis; L-arginine biosynthesis; N(2)-acetyl-L-ornithine from L-glutamate: step 1/4. The chain is Amino-acid acetyltransferase from Mannheimia succiniciproducens (strain KCTC 0769BP / MBEL55E).